The primary structure comprises 88 residues: MAHKKGTGSTRNGRDSNAQRLGVKKFGGEVVRSGSIIVRQRGTKFHPGVNVGRGGDDTLFALIDGVVTFERKGKGGKKVSVYPAGEAA.

The segment at 1–23 (MAHKKGTGSTRNGRDSNAQRLGV) is disordered. The segment covering 7–19 (TGSTRNGRDSNAQ) has biased composition (polar residues).

This sequence belongs to the bacterial ribosomal protein bL27 family.

The polypeptide is Large ribosomal subunit protein bL27 (rpmA) (Synechococcus elongatus (strain ATCC 33912 / PCC 7942 / FACHB-805) (Anacystis nidulans R2)).